We begin with the raw amino-acid sequence, 492 residues long: Ketol-acid reductoisomerase (NADP(+)) (492 aa).

One can recognise a KARI N-terminal Rossmann domain in the interval Leu-17 to Ser-208. Residues Cys-45–Gln-48, Arg-68, Ser-76, and Ser-78 each bind NADP(+). His-132 is an active-site residue. Gly-158 provides a ligand contact to NADP(+). 2 consecutive KARI C-terminal knotted domains span residues Ser-209 to Val-344 and Tyr-345 to Met-487. Positions 217, 221, 389, and 393 each coordinate Mg(2+). Residue Ser-414 participates in substrate binding.

The protein belongs to the ketol-acid reductoisomerase family. Mg(2+) serves as cofactor.

The catalysed reaction is (2R)-2,3-dihydroxy-3-methylbutanoate + NADP(+) = (2S)-2-acetolactate + NADPH + H(+). It catalyses the reaction (2R,3R)-2,3-dihydroxy-3-methylpentanoate + NADP(+) = (S)-2-ethyl-2-hydroxy-3-oxobutanoate + NADPH + H(+). It functions in the pathway amino-acid biosynthesis; L-isoleucine biosynthesis; L-isoleucine from 2-oxobutanoate: step 2/4. Its pathway is amino-acid biosynthesis; L-valine biosynthesis; L-valine from pyruvate: step 2/4. Its function is as follows. Involved in the biosynthesis of branched-chain amino acids (BCAA). Catalyzes an alkyl-migration followed by a ketol-acid reduction of (S)-2-acetolactate (S2AL) to yield (R)-2,3-dihydroxy-isovalerate. In the isomerase reaction, S2AL is rearranged via a Mg-dependent methyl migration to produce 3-hydroxy-3-methyl-2-ketobutyrate (HMKB). In the reductase reaction, this 2-ketoacid undergoes a metal-dependent reduction by NADPH to yield (R)-2,3-dihydroxy-isovalerate. The chain is Ketol-acid reductoisomerase (NADP(+)) from Blochmanniella floridana.